Consider the following 304-residue polypeptide: KIN17-like protein (304 aa).

The C2H2-type zinc finger occupies 26–50 (WYCSACQKQMRDENGFKCHTQSEGH). Disordered stretches follow at residues 204–228 (IDLSKKGNPIQLNLSSSSDSHSAQN) and 261–291 (LNKSRKKNNKDSLDQGQNVKRPRSAVEDIIA).

It belongs to the KIN17 family.

The protein resides in the nucleus. Its subcellular location is the nucleolus. The polypeptide is KIN17-like protein (Schizosaccharomyces pombe (strain 972 / ATCC 24843) (Fission yeast)).